The following is a 283-amino-acid chain: Elongation factor Ts (283 aa).

Residues 82 to 85 form an involved in Mg(2+) ion dislocation from EF-Tu region; that stretch reads TDFV.

This sequence belongs to the EF-Ts family.

Its subcellular location is the cytoplasm. Associates with the EF-Tu.GDP complex and induces the exchange of GDP to GTP. It remains bound to the aminoacyl-tRNA.EF-Tu.GTP complex up to the GTP hydrolysis stage on the ribosome. The protein is Elongation factor Ts of Photorhabdus laumondii subsp. laumondii (strain DSM 15139 / CIP 105565 / TT01) (Photorhabdus luminescens subsp. laumondii).